Reading from the N-terminus, the 308-residue chain is Phosphoribosylaminoimidazole-succinocarboxamide synthase (308 aa).

Belongs to the SAICAR synthetase family.

The enzyme catalyses 5-amino-1-(5-phospho-D-ribosyl)imidazole-4-carboxylate + L-aspartate + ATP = (2S)-2-[5-amino-1-(5-phospho-beta-D-ribosyl)imidazole-4-carboxamido]succinate + ADP + phosphate + 2 H(+). Its pathway is purine metabolism; IMP biosynthesis via de novo pathway; 5-amino-1-(5-phospho-D-ribosyl)imidazole-4-carboxamide from 5-amino-1-(5-phospho-D-ribosyl)imidazole-4-carboxylate: step 1/2. The polypeptide is Phosphoribosylaminoimidazole-succinocarboxamide synthase (Xylella fastidiosa (strain Temecula1 / ATCC 700964)).